The sequence spans 720 residues: Catalase-peroxidase (720 aa).

The segment at residues 94 to 222 is a cross-link (tryptophyl-tyrosyl-methioninium (Trp-Tyr) (with M-248)); the sequence is WHAAGTYRIA…LAAVTMGLIY (129 aa). His95 (proton acceptor) is an active-site residue. Residues 222–248 constitute a cross-link (tryptophyl-tyrosyl-methioninium (Tyr-Met) (with W-94)); it reads YVNPEGVDGNPDPLKTAHDVRVTFARM. His263 is a heme b binding site.

It belongs to the peroxidase family. Peroxidase/catalase subfamily. Homodimer. It depends on heme b as a cofactor. Formation of the three residue Trp-Tyr-Met cross-link is important for the catalase, but not the peroxidase activity of the enzyme.

The catalysed reaction is H2O2 + AH2 = A + 2 H2O. It catalyses the reaction 2 H2O2 = O2 + 2 H2O. Its function is as follows. Bifunctional enzyme with both catalase and broad-spectrum peroxidase activity. This chain is Catalase-peroxidase, found in Synechococcus elongatus (strain ATCC 33912 / PCC 7942 / FACHB-805) (Anacystis nidulans R2).